A 232-amino-acid polypeptide reads, in one-letter code: Secreted LysM effector Mg3LysM (232 aa).

The signal sequence occupies residues 1–16 (MQNIFLAATLLGAAFA). Residues 47–91 (TNYTVKAGDTLGAIAKQYNSGVCDIAKVNGIDNPDYIKPDQVLSI) enclose the LysM 1 domain. N48, N100, N138, N195, N209, and N227 each carry an N-linked (GlcNAc...) asparagine glycan. LysM domains follow at residues 120 to 165 (STYT…VINT) and 177 to 221 (GTYV…IIIL).

Belongs to the secreted LysM effector family.

Its function is as follows. Secreted effector that enables the plant pathogenic fungus to manipulate host defenses for successful infection. Binds chitin fragments and blocks the activation of chitin-induced plant defense responses. Protects fungal hyphae against hydrolytic plant enzymes. The sequence is that of Secreted LysM effector Mg3LysM from Zymoseptoria tritici (strain CBS 115943 / IPO323) (Speckled leaf blotch fungus).